Reading from the N-terminus, the 171-residue chain is Nicotinamide-nucleotide adenylyltransferase (171 aa).

The protein belongs to the archaeal NMN adenylyltransferase family.

The protein resides in the cytoplasm. It carries out the reaction beta-nicotinamide D-ribonucleotide + ATP + H(+) = diphosphate + NAD(+). It functions in the pathway cofactor biosynthesis; NAD(+) biosynthesis; NAD(+) from nicotinamide D-ribonucleotide: step 1/1. This chain is Nicotinamide-nucleotide adenylyltransferase, found in Ignicoccus hospitalis (strain KIN4/I / DSM 18386 / JCM 14125).